We begin with the raw amino-acid sequence, 191 residues long: Cell division protein SepF (191 aa).

The interval 21-96 (EVEEPAVASV…NQQPAQEKTT (76 aa)) is disordered. Positions 25–56 (PAVASVKRQQDAAQPASQQQKAQSHQYHQSAS) are enriched in low complexity. Polar residues-rich tracts occupy residues 57-69 (RPSQQQVQSGQNR) and 86-95 (HNQQPAQEKT).

It belongs to the SepF family. As to quaternary structure, homodimer. Interacts with FtsZ.

The protein localises to the cytoplasm. In terms of biological role, cell division protein that is part of the divisome complex and is recruited early to the Z-ring. Probably stimulates Z-ring formation, perhaps through the cross-linking of FtsZ protofilaments. Its function overlaps with FtsA. The sequence is that of Cell division protein SepF from Streptococcus mutans serotype c (strain ATCC 700610 / UA159).